Reading from the N-terminus, the 897-residue chain is Beta-galactosidase (897 aa).

The active-site Proton donor is glutamate 459. The active-site Nucleophile is the glutamate 525.

It belongs to the glycosyl hydrolase 2 family.

It carries out the reaction Hydrolysis of terminal non-reducing beta-D-galactose residues in beta-D-galactosides.. In Clostridium acetobutylicum, this protein is Beta-galactosidase (cbgA).